We begin with the raw amino-acid sequence, 143 residues long: Large ribosomal subunit protein uL13 (143 aa).

Belongs to the universal ribosomal protein uL13 family. Part of the 50S ribosomal subunit.

Functionally, this protein is one of the early assembly proteins of the 50S ribosomal subunit, although it is not seen to bind rRNA by itself. It is important during the early stages of 50S assembly. In Dichelobacter nodosus (strain VCS1703A), this protein is Large ribosomal subunit protein uL13.